The primary structure comprises 159 residues: Small ribosomal subunit protein uS7 (159 aa).

It belongs to the universal ribosomal protein uS7 family. As to quaternary structure, part of the 30S ribosomal subunit. Contacts proteins S9 and S11.

Functionally, one of the primary rRNA binding proteins, it binds directly to 16S rRNA where it nucleates assembly of the head domain of the 30S subunit. Is located at the subunit interface close to the decoding center, probably blocks exit of the E-site tRNA. This chain is Small ribosomal subunit protein uS7, found in Rickettsia felis (strain ATCC VR-1525 / URRWXCal2) (Rickettsia azadi).